Here is a 215-residue protein sequence, read N- to C-terminus: N-(5'-phosphoribosyl)anthranilate isomerase (215 aa).

It belongs to the TrpF family.

The enzyme catalyses N-(5-phospho-beta-D-ribosyl)anthranilate = 1-(2-carboxyphenylamino)-1-deoxy-D-ribulose 5-phosphate. It participates in amino-acid biosynthesis; L-tryptophan biosynthesis; L-tryptophan from chorismate: step 3/5. In Rippkaea orientalis (strain PCC 8801 / RF-1) (Cyanothece sp. (strain PCC 8801)), this protein is N-(5'-phosphoribosyl)anthranilate isomerase.